A 143-amino-acid chain; its full sequence is Larval cuticle protein LCP-17 (143 aa).

Positions 1-16 (MKFLIVLAVAVACASA) are cleaved as a signal peptide. A Chitin-binding type R&amp;R domain is found at 41-110 (EGHFQFNYET…PQGSHLPTPH (70 aa)).

Functionally, component of the cuticle of the larva of Bombyx mori. The polypeptide is Larval cuticle protein LCP-17 (LCP17) (Bombyx mori (Silk moth)).